A 226-amino-acid polypeptide reads, in one-letter code: Thymidylate kinase (226 aa).

Residue 12-19 coordinates ATP; that stretch reads GIDGAGKS.

Belongs to the thymidylate kinase family.

The catalysed reaction is dTMP + ATP = dTDP + ADP. Functionally, phosphorylation of dTMP to form dTDP in both de novo and salvage pathways of dTTP synthesis. The protein is Thymidylate kinase of Verminephrobacter eiseniae (strain EF01-2).